Consider the following 311-residue polypeptide: tRNA-cytidine(32) 2-sulfurtransferase (311 aa).

The PP-loop motif signature appears at 47 to 52 (SGGKDS). [4Fe-4S] cluster-binding residues include cysteine 122, cysteine 125, and cysteine 213.

It belongs to the TtcA family. In terms of assembly, homodimer. It depends on Mg(2+) as a cofactor. The cofactor is [4Fe-4S] cluster.

The protein localises to the cytoplasm. The enzyme catalyses cytidine(32) in tRNA + S-sulfanyl-L-cysteinyl-[cysteine desulfurase] + AH2 + ATP = 2-thiocytidine(32) in tRNA + L-cysteinyl-[cysteine desulfurase] + A + AMP + diphosphate + H(+). Its pathway is tRNA modification. Functionally, catalyzes the ATP-dependent 2-thiolation of cytidine in position 32 of tRNA, to form 2-thiocytidine (s(2)C32). The sulfur atoms are provided by the cysteine/cysteine desulfurase (IscS) system. This Escherichia coli (strain SMS-3-5 / SECEC) protein is tRNA-cytidine(32) 2-sulfurtransferase.